A 569-amino-acid polypeptide reads, in one-letter code: Urease subunit alpha (569 aa).

Residues 131 to 569 (GSIDTHIHFI…VPMAQRYFLL (439 aa)) form the Urease domain. Residues His-136, His-138, and Lys-219 each coordinate Ni(2+). Lys-219 is subject to N6-carboxylysine. His-221 provides a ligand contact to substrate. Residues His-248 and His-274 each contribute to the Ni(2+) site. His-322 serves as the catalytic Proton donor. Position 362 (Asp-362) interacts with Ni(2+).

Belongs to the metallo-dependent hydrolases superfamily. Urease alpha subunit family. In terms of assembly, heterotrimer of UreA (gamma), UreB (beta) and UreC (alpha) subunits. Three heterotrimers associate to form the active enzyme. Requires Ni cation as cofactor. Carboxylation allows a single lysine to coordinate two nickel ions.

It is found in the cytoplasm. It carries out the reaction urea + 2 H2O + H(+) = hydrogencarbonate + 2 NH4(+). It participates in nitrogen metabolism; urea degradation; CO(2) and NH(3) from urea (urease route): step 1/1. The sequence is that of Urease subunit alpha from Prochlorococcus marinus (strain MIT 9301).